A 318-amino-acid chain; its full sequence is tRNA U34 carboxymethyltransferase (318 aa).

Carboxy-S-adenosyl-L-methionine is bound by residues Lys-88, Trp-102, Lys-107, Gly-126, Leu-176 to Glu-177, Met-192, Tyr-196, and Arg-311.

This sequence belongs to the class I-like SAM-binding methyltransferase superfamily. CmoB family. Homotetramer.

It catalyses the reaction carboxy-S-adenosyl-L-methionine + 5-hydroxyuridine(34) in tRNA = 5-carboxymethoxyuridine(34) in tRNA + S-adenosyl-L-homocysteine + H(+). Its function is as follows. Catalyzes carboxymethyl transfer from carboxy-S-adenosyl-L-methionine (Cx-SAM) to 5-hydroxyuridine (ho5U) to form 5-carboxymethoxyuridine (cmo5U) at position 34 in tRNAs. This is tRNA U34 carboxymethyltransferase from Pseudomonas putida (strain W619).